We begin with the raw amino-acid sequence, 256 residues long: D-aminoacyl-tRNA deacylase (256 aa).

This sequence belongs to the DtdA deacylase family. In terms of assembly, monomer. The cofactor is Zn(2+).

It carries out the reaction a D-aminoacyl-tRNA + H2O = a tRNA + a D-alpha-amino acid + H(+). It catalyses the reaction glycyl-tRNA(Ala) + H2O = tRNA(Ala) + glycine + H(+). D-aminoacyl-tRNA deacylase with broad substrate specificity. By recycling D-aminoacyl-tRNA to D-amino acids and free tRNA molecules, this enzyme counteracts the toxicity associated with the formation of D-aminoacyl-tRNA entities in vivo. The chain is D-aminoacyl-tRNA deacylase from Thermoplasma volcanium (strain ATCC 51530 / DSM 4299 / JCM 9571 / NBRC 15438 / GSS1).